The primary structure comprises 273 residues: Large ribosomal subunit protein uL2 (273 aa).

2 disordered regions span residues 34–54 and 223–273; these read LEKK…TRHI and VAMN…RRRK.

Belongs to the universal ribosomal protein uL2 family. As to quaternary structure, part of the 50S ribosomal subunit. Forms a bridge to the 30S subunit in the 70S ribosome.

One of the primary rRNA binding proteins. Required for association of the 30S and 50S subunits to form the 70S ribosome, for tRNA binding and peptide bond formation. It has been suggested to have peptidyltransferase activity; this is somewhat controversial. Makes several contacts with the 16S rRNA in the 70S ribosome. The protein is Large ribosomal subunit protein uL2 of Azotobacter vinelandii (strain DJ / ATCC BAA-1303).